The following is a 323-amino-acid chain: ATP synthase gamma chain (323 aa).

This sequence belongs to the ATPase gamma chain family. In terms of assembly, F-type ATPases have 2 components, CF(1) - the catalytic core - and CF(0) - the membrane proton channel. CF(1) has five subunits: alpha(3), beta(3), gamma(1), delta(1), epsilon(1). CF(0) has three main subunits: a, b and c.

It is found in the cell inner membrane. Functionally, produces ATP from ADP in the presence of a proton gradient across the membrane. The gamma chain is believed to be important in regulating ATPase activity and the flow of protons through the CF(0) complex. The sequence is that of ATP synthase gamma chain from Rickettsia peacockii (strain Rustic).